The chain runs to 162 residues: B-box zinc finger protein 23 (162 aa).

Residues cysteine 5, cysteine 8, cysteine 28, histidine 33, cysteine 63, cysteine 66, cysteine 86, and histidine 91 each coordinate Zn(2+). A B box-type 1; atypical zinc finger spans residues 5–47 (CEVCEKAEAEVLCCSDEAVLCKPCDIKVHEANKLFQRHHRVAL). Residues 63 to 101 (CDICQERKGYFFCLEDRAMLCNDCDEAIHTCNSHQRFLL) form a B box-type 2; atypical zinc finger. Positions 137–162 (QYSSEETEAGNSGEIVHKNPSVILSP) are disordered.

It is found in the nucleus. Its function is as follows. Probable transcription factor that may be involved in seedling photomorphogenesis. The polypeptide is B-box zinc finger protein 23 (Arabidopsis thaliana (Mouse-ear cress)).